The following is a 385-amino-acid chain: Tuliposide A-converting enzyme 1, chloroplastic (385 aa).

Residues 1–77 (MSVASFFSSL…PSPSLSPTPT (77 aa)) constitute a chloroplast transit peptide. Residue Ser-235 is the Acyl-ester intermediate of the active site. Active-site charge relay system residues include Asp-327 and His-359.

Belongs to the AB hydrolase superfamily. Homodimer. Expressed in roots, stems, leaves, petals, stamens and pistils, but not in bulb scales.

The protein resides in the plastid. It localises to the chloroplast. It carries out the reaction 6-tuliposide A = tulipalin A + D-glucose. Its activity is regulated as follows. Inhibited by NaF, AgNO(3), HgCl(2), CuSO(4) and phenylmethylsulfonyl fluoride (PMSF). Its function is as follows. Lactone-forming carboxylesterases, specifically catalyzing intramolecular transesterification, but not hydrolysis. Involved in the biosynthesis of tulipalins, defensive chemicals that show antimicrobial activities against a broad range of strains of bacteria and fungi. Substrates are 6-tuliposide A &gt; 6-tuliposide B. The protein is Tuliposide A-converting enzyme 1, chloroplastic (TCEA1) of Tulipa gesneriana (Garden tulip).